The sequence spans 113 residues: Large ribosomal subunit protein uL22 (113 aa).

This sequence belongs to the universal ribosomal protein uL22 family. Part of the 50S ribosomal subunit.

In terms of biological role, this protein binds specifically to 23S rRNA; its binding is stimulated by other ribosomal proteins, e.g. L4, L17, and L20. It is important during the early stages of 50S assembly. It makes multiple contacts with different domains of the 23S rRNA in the assembled 50S subunit and ribosome. The globular domain of the protein is located near the polypeptide exit tunnel on the outside of the subunit, while an extended beta-hairpin is found that lines the wall of the exit tunnel in the center of the 70S ribosome. The protein is Large ribosomal subunit protein uL22 of Roseiflexus castenholzii (strain DSM 13941 / HLO8).